The sequence spans 372 residues: 4-hydroxy-3-methylbut-2-en-1-yl diphosphate synthase (flavodoxin) (372 aa).

4 residues coordinate [4Fe-4S] cluster: cysteine 270, cysteine 273, cysteine 305, and glutamate 312.

Belongs to the IspG family. [4Fe-4S] cluster serves as cofactor.

The enzyme catalyses (2E)-4-hydroxy-3-methylbut-2-enyl diphosphate + oxidized [flavodoxin] + H2O + 2 H(+) = 2-C-methyl-D-erythritol 2,4-cyclic diphosphate + reduced [flavodoxin]. It functions in the pathway isoprenoid biosynthesis; isopentenyl diphosphate biosynthesis via DXP pathway; isopentenyl diphosphate from 1-deoxy-D-xylulose 5-phosphate: step 5/6. Its function is as follows. Converts 2C-methyl-D-erythritol 2,4-cyclodiphosphate (ME-2,4cPP) into 1-hydroxy-2-methyl-2-(E)-butenyl 4-diphosphate. This is 4-hydroxy-3-methylbut-2-en-1-yl diphosphate synthase (flavodoxin) from Salmonella gallinarum (strain 287/91 / NCTC 13346).